Reading from the N-terminus, the 123-residue chain is Large ribosomal subunit protein bL12 (123 aa).

It belongs to the bacterial ribosomal protein bL12 family. In terms of assembly, homodimer. Part of the ribosomal stalk of the 50S ribosomal subunit. Forms a multimeric L10(L12)X complex, where L10 forms an elongated spine to which 2 to 4 L12 dimers bind in a sequential fashion. Binds GTP-bound translation factors.

Forms part of the ribosomal stalk which helps the ribosome interact with GTP-bound translation factors. Is thus essential for accurate translation. The polypeptide is Large ribosomal subunit protein bL12 (Desulfotalea psychrophila (strain LSv54 / DSM 12343)).